Here is a 376-residue protein sequence, read N- to C-terminus: 1-deoxy-D-xylulose 5-phosphate reductoisomerase (376 aa).

Positions 10, 11, 12, 13, 36, 37, 38, and 118 each coordinate NADPH. Residue Lys119 participates in 1-deoxy-D-xylulose 5-phosphate binding. Residue Glu120 participates in NADPH binding. Residue Asp144 coordinates Mn(2+). 1-deoxy-D-xylulose 5-phosphate contacts are provided by Ser145, Glu146, Ser170, and His193. Glu146 serves as a coordination point for Mn(2+). Position 199 (Gly199) interacts with NADPH. 1-deoxy-D-xylulose 5-phosphate is bound by residues Ser206, Asn211, Lys212, and Glu215. A Mn(2+)-binding site is contributed by Glu215.

This sequence belongs to the DXR family. Mg(2+) serves as cofactor. It depends on Mn(2+) as a cofactor.

The catalysed reaction is 2-C-methyl-D-erythritol 4-phosphate + NADP(+) = 1-deoxy-D-xylulose 5-phosphate + NADPH + H(+). It functions in the pathway isoprenoid biosynthesis; isopentenyl diphosphate biosynthesis via DXP pathway; isopentenyl diphosphate from 1-deoxy-D-xylulose 5-phosphate: step 1/6. Functionally, catalyzes the NADPH-dependent rearrangement and reduction of 1-deoxy-D-xylulose-5-phosphate (DXP) to 2-C-methyl-D-erythritol 4-phosphate (MEP). The polypeptide is 1-deoxy-D-xylulose 5-phosphate reductoisomerase (Macrococcus caseolyticus (strain JCSC5402) (Macrococcoides caseolyticum)).